Here is a 631-residue protein sequence, read N- to C-terminus: Chaperone protein HtpG (631 aa).

The segment at 1–338 is a; substrate-binding; sequence MILKEQETLG…CNDLPLNISR (338 aa). Residues 339-554 form a b region; sequence EMLQHNRITQ…SNNMTTHMAK (216 aa). The tract at residues 555 to 631 is c; it reads LIVASGQNKP…KLLNHDTIVN (77 aa).

The protein belongs to the heat shock protein 90 family. In terms of assembly, homodimer.

The protein resides in the cytoplasm. Its function is as follows. Molecular chaperone. Has ATPase activity. The chain is Chaperone protein HtpG from Baumannia cicadellinicola subsp. Homalodisca coagulata.